The primary structure comprises 206 residues: Cytochrome c oxidase assembly protein CtaG (206 aa).

The Cytoplasmic portion of the chain corresponds to 1-22 (MTEQPTNRNDVPRRGLGRDATV). The helical; Signal-anchor for type II membrane protein transmembrane segment at 23–43 (ASICGLVVALMVGASYAAVPF) threads the bilayer. Residues 44–206 (YNWFCRATGF…GEPDSRKGAL (163 aa)) lie on the Periplasmic side of the membrane.

It belongs to the COX11/CtaG family.

It is found in the cell inner membrane. Its function is as follows. Exerts its effect at some terminal stage of cytochrome c oxidase synthesis, probably by being involved in the insertion of the copper B into subunit I. In Rhodopseudomonas palustris (strain BisB18), this protein is Cytochrome c oxidase assembly protein CtaG.